The following is a 279-amino-acid chain: Large ribosomal subunit protein uL2 (279 aa).

Disordered stretches follow at residues 1–43 and 207–279; these read MGIK…TAGR and KAGR…PGKH. Residues 8-22 are compositionally biased toward polar residues; sequence PTTNGRRNMTASDFS. The segment covering 23-33 has biased composition (basic and acidic residues); it reads EITKTKPEKSL. Residues 34–43 are compositionally biased toward polar residues; the sequence is LDSQSHTAGR. Composition is skewed to basic residues over residues 209 to 219 and 254 to 279; these read GRTRWQGKRPT and TLGKKTRNKKARSNKLIVRGRRPGKH.

It belongs to the universal ribosomal protein uL2 family. As to quaternary structure, part of the 50S ribosomal subunit. Forms a bridge to the 30S subunit in the 70S ribosome.

One of the primary rRNA binding proteins. Required for association of the 30S and 50S subunits to form the 70S ribosome, for tRNA binding and peptide bond formation. It has been suggested to have peptidyltransferase activity; this is somewhat controversial. Makes several contacts with the 16S rRNA in the 70S ribosome. The polypeptide is Large ribosomal subunit protein uL2 (Lactiplantibacillus plantarum (strain ATCC BAA-793 / NCIMB 8826 / WCFS1) (Lactobacillus plantarum)).